Here is a 137-residue protein sequence, read N- to C-terminus: MKPAARRRARECAVQAIYSWQLSGNDIADVELEFLSEQDTQGVDIAYFRELLVGVAINAARLDKAMEPYLSRQLEELGQVEKAILRLAMFELSFREDVPYKVAINEAIELAKVFGADDSHKFVNGVLDKAAPTVRKK.

Belongs to the NusB family.

Involved in transcription antitermination. Required for transcription of ribosomal RNA (rRNA) genes. Binds specifically to the boxA antiterminator sequence of the ribosomal RNA (rrn) operons. The chain is Transcription antitermination protein NusB from Proteus mirabilis (strain HI4320).